We begin with the raw amino-acid sequence, 219 residues long: Ribose-5-phosphate isomerase A (219 aa).

Residues 29 to 32 (TGST), 82 to 85 (DGAD), and 95 to 98 (KGGG) contribute to the substrate site. The active-site Proton acceptor is Glu-104. Lys-122 is a binding site for substrate.

It belongs to the ribose 5-phosphate isomerase family. As to quaternary structure, homodimer.

It carries out the reaction aldehydo-D-ribose 5-phosphate = D-ribulose 5-phosphate. The protein operates within carbohydrate degradation; pentose phosphate pathway; D-ribose 5-phosphate from D-ribulose 5-phosphate (non-oxidative stage): step 1/1. Catalyzes the reversible conversion of ribose-5-phosphate to ribulose 5-phosphate. The sequence is that of Ribose-5-phosphate isomerase A from Chromobacterium violaceum (strain ATCC 12472 / DSM 30191 / JCM 1249 / CCUG 213 / NBRC 12614 / NCIMB 9131 / NCTC 9757 / MK).